The sequence spans 352 residues: tRNA-specific 2-thiouridylase MnmA (352 aa).

ATP contacts are provided by residues 11-18 (AMSGGVDS) and Met-37. The Nucleophile role is filled by Cys-101. An intrachain disulfide couples Cys-101 to Cys-197. ATP is bound at residue Gly-125. An interaction with tRNA region spans residues 147–149 (KDQ). Cys-197 acts as the Cysteine persulfide intermediate in catalysis. The interval 302–303 (RY) is interaction with tRNA.

This sequence belongs to the MnmA/TRMU family.

The protein resides in the cytoplasm. The enzyme catalyses S-sulfanyl-L-cysteinyl-[protein] + uridine(34) in tRNA + AH2 + ATP = 2-thiouridine(34) in tRNA + L-cysteinyl-[protein] + A + AMP + diphosphate + H(+). Catalyzes the 2-thiolation of uridine at the wobble position (U34) of tRNA, leading to the formation of s(2)U34. The protein is tRNA-specific 2-thiouridylase MnmA of Syntrophotalea carbinolica (strain DSM 2380 / NBRC 103641 / GraBd1) (Pelobacter carbinolicus).